The following is a 340-amino-acid chain: HTH-type transcriptional regulator CelR (340 aa).

In terms of domain architecture, HTH lacI-type spans 1–61 (MERRRRPTLE…PNRAARTLVT (61 aa)). Positions 9 to 28 (LEMVAALAGVGRGTVSRVIN) form a DNA-binding region, H-T-H motif.

The protein resides in the cytoplasm. With respect to regulation, activity is controlled by cytoplasmic cellobiose levels. Binding of CelR to the celE promoter is inhibited specifically by low concentrations of cellobiose, the major end product of cellulases. Activity may also be regulated through post-translational modification. Transcriptional regulator that regulates the expression of all six cellulases, encoded by the cel genes (designated celA through celF). Acts as a repressor. Specifically binds to a 14-bp inverted repeat site, which is present in the upstream region of the cellulase genes. The protein is HTH-type transcriptional regulator CelR of Thermobifida fusca (Thermomonospora fusca).